Consider the following 87-residue polypeptide: Probable Fe(2+)-trafficking protein (87 aa).

Belongs to the Fe(2+)-trafficking protein family.

In terms of biological role, could be a mediator in iron transactions between iron acquisition and iron-requiring processes, such as synthesis and/or repair of Fe-S clusters in biosynthetic enzymes. The chain is Probable Fe(2+)-trafficking protein from Francisella tularensis subsp. mediasiatica (strain FSC147).